The sequence spans 197 residues: Ribonuclease HII (197 aa).

Residues 11–197 (HLIAGVDEVG…FAPVKKILGL (187 aa)) form the RNase H type-2 domain. Residues aspartate 17, glutamate 18, and aspartate 109 each coordinate a divalent metal cation.

Belongs to the RNase HII family. Mn(2+) serves as cofactor. Mg(2+) is required as a cofactor.

The protein resides in the cytoplasm. The catalysed reaction is Endonucleolytic cleavage to 5'-phosphomonoester.. In terms of biological role, endonuclease that specifically degrades the RNA of RNA-DNA hybrids. This chain is Ribonuclease HII, found in Actinobacillus pleuropneumoniae serotype 7 (strain AP76).